A 509-amino-acid polypeptide reads, in one-letter code: MWKASAGHAVSITQDDGGADDWETDPDFVNDVSEKEQRWGAKTVQGSGHQEHINIHKLRENVFQEHQTLKEKELETGPKASHGYGGKFGVEQDRMDKSAVGHEYQSKLSKHCSQVDSVRGFGGKFGVQMDRVDQSAVGFEYQGKTEKHASQKDYSSGFGGKYGVQADRVDKSAVGFDYQGKTEKHESQKDYSKGFGGKYGIDKDKVDKSAVGFEYQGKTEKHESQKDYVKGFGGKFGVQTDRQDKCALGWDHQEKLQLHESQKDYAKGFGGKYGVQKDRMDKNASTFEEVVQVPSAYQKTVPIEAVTSKTSNIRANFENLAKEREQEDRRKAEAERAQRMAQERQEQEEARRKLEEQARAKKQTPPASPSPQPAEDRPPSSPIYEDAAPLKAEPSYGSSEPEPEYSTEAAGLPEASNQQGLAYTSEPVYETTEVPGHYQAEDDTYDGYESDLGITAIALYDYQAAGDDEISFDPDDVITNIEMIDDGWWRGVCKGRYGLFPANYVELRQ.

The tract at residues 1 to 28 is disordered; the sequence is MWKASAGHAVSITQDDGGADDWETDPDF. The segment covering 17-28 has biased composition (acidic residues); sequence GGADDWETDPDF. Cortactin repeat units follow at residues 80-116, 117-153, 154-190, 191-227, and 228-264; these read ASHGYGGKFGVEQDRMDKSAVGHEYQSKLSKHCSQVD, SVRGFGGKFGVQMDRVDQSAVGFEYQGKTEKHASQKD, YSSGFGGKYGVQADRVDKSAVGFDYQGKTEKHESQKD, YSKGFGGKYGIDKDKVDKSAVGFEYQGKTEKHESQKD, and YVKGFGGKFGVQTDRQDKCALGWDHQEKLQLHESQKD. 2 positions are modified to N6-acetyllysine: K87 and K107. Residue S113 is modified to Phosphoserine. R119 bears the Omega-N-methylarginine mark. Position 124 is an N6-acetyllysine (K124). K144 carries the N6-acetyllysine; alternate modification. K144 participates in a covalent cross-link: Glycyl lysine isopeptide (Lys-Gly) (interchain with G-Cter in SUMO1); alternate. K144 is covalently cross-linked (Glycyl lysine isopeptide (Lys-Gly) (interchain with G-Cter in SUMO2); alternate). S150 carries the phosphoserine modification. 3 positions are modified to N6-acetyllysine: K152, K161, and K171. K181 carries the N6-acetyllysine; alternate modification. Residue K181 forms a Glycyl lysine isopeptide (Lys-Gly) (interchain with G-Cter in SUMO1); alternate linkage. Residue K181 forms a Glycyl lysine isopeptide (Lys-Gly) (interchain with G-Cter in SUMO2); alternate linkage. 2 positions are modified to N6-acetyllysine: K193 and K198. A Glycyl lysine isopeptide (Lys-Gly) (interchain with G-Cter in SUMO1) cross-link involves residue K218. K235 is modified (N6-acetyllysine). Position 261 is a phosphoserine (S261). Residues 265–287 form a Cortactin 6; truncated repeat; it reads YAKGFGGKYGVQKDRMDKNASTF. 4 positions are modified to N6-acetyllysine: K267, K272, K277, and K309. Positions 311-364 form a coiled coil; it reads SNIRANFENLAKEREQEDRRKAEAERAQRMAQERQEQEEARRKLEEQARAKKQT. The disordered stretch occupies residues 318–409; sequence ENLAKEREQE…EPEPEYSTEA (92 aa). The span at 320–359 shows a compositional bias: basic and acidic residues; the sequence is LAKEREQEDRRKAEAERAQRMAQERQEQEEARRKLEEQAR. T364 is modified (phosphothreonine). S368, S370, S380, and S381 each carry phosphoserine. Y384 carries the phosphotyrosine; by FAK1 modification. Low complexity predominate over residues 393–406; sequence EPSYGSSEPEPEYS. Y405 carries the post-translational modification Phosphotyrosine. Position 406 is a phosphoserine (S406). Residues Y429 and Y445 each carry the phosphotyrosine; by FAK1 modification. Residues Y445 and Y448 each carry the phosphotyrosine; by SRC modification. The region spanning 451–509 is the SH3 domain; it reads DLGITAIALYDYQAAGDDEISFDPDDVITNIEMIDDGWWRGVCKGRYGLFPANYVELRQ.

In terms of assembly, part of a complex composed of NEDD9, AURKA and CTTN; within the complex NEDD9 acts as a scaffold protein and is required for complex formation. Interacts (via N-terminus) with NEDD9. Identified in a complex containing FGFR4, NCAM1, CDH2, PLCG1, FRS2, SRC, SHC1, GAP43 and CTTN. Forms a complex with ABL1 and MYLK. Interacts with SHANK2 and SHANK3 (via its SH3 domain). Interacts with PLXDC2 and SRCIN1. Interacts with SAMSN1 (via SH3 domain). Interacts (via SH3 domain) with ASAP1 (via Pro-rich region). Interacts with FER. Interacts with FGD1. Interacts with ABL2. Interacts with CTTNBP2NL; this interaction may target CTTN to stress fibers. Interacts with CTTNBP2; this interaction may target CTTN at the cell cortex or dendritic spines. Interacts (via SH3 domain) with DNM2. Interacts with ACTN1. Interacts with KCNA2 (via non-phosphorylated C-terminus). Interacts with PTK2/FAK1. Interacts with KCNH1. Interacts (via SH3 domain) with DIP2A (via N-terminus); the interaction enhances CTTN acetylation and is required for proper synaptic transmission. Interacts with XIRP1 (via N-terminus); the interaction promotes CTTN localization to intercalated disks in cardiomyocytes. Post-translationally, acetylated. Phosphorylated by FER. Phosphorylated in response to FGR activation. Phosphorylation by SRC promotes MYLK binding. Tyrosine phosphorylation in transformed cells may contribute to cellular growth regulation and transformation. Phosphorylated by PKN2 at both serine and threonine residues in a GTP-bound Rac1-dependent manner in hyaluronan-induced astrocytes and hence down-regulated CTTN ability to associate with filamentous actin. Phosphorylated on tyrosine residues in response to CHRM1 activation. Phosphorylated by PTK2/FAK1 in response to cell adhesion. Detected in liver (at protein level).

Its subcellular location is the cytoplasm. The protein resides in the cytoskeleton. The protein localises to the cell projection. It is found in the lamellipodium. It localises to the ruffle. Its subcellular location is the dendrite. The protein resides in the cell membrane. The protein localises to the podosome. It is found in the cell junction. It localises to the focal adhesion. Its subcellular location is the membrane. The protein resides in the clathrin-coated pit. The protein localises to the dendritic spine. It is found in the cell cortex. It localises to the endoplasmic reticulum. In terms of biological role, contributes to the organization of the actin cytoskeleton and cell shape. Plays a role in the formation of lamellipodia and in cell migration. Plays a role in the regulation of neuron morphology, axon growth and formation of neuronal growth cones. Through its interaction with CTTNBP2, involved in the regulation of neuronal spine density. Plays a role in focal adhesion assembly and turnover. In complex with ABL1 and MYLK regulates cortical actin-based cytoskeletal rearrangement critical to sphingosine 1-phosphate (S1P)-mediated endothelial cell (EC) barrier enhancement. Plays a role in intracellular protein transport and endocytosis, and in modulating the levels of potassium channels present at the cell membrane. Plays a role in receptor-mediated endocytosis via clathrin-coated pits. Required for stabilization of KCNH1 channels at the cell membrane. The chain is Src substrate cortactin from Rattus norvegicus (Rat).